Here is a 333-residue protein sequence, read N- to C-terminus: NADH-quinone oxidoreductase subunit H (333 aa).

A run of 8 helical transmembrane segments spans residues 17 to 37 (IFFA…TYGI), 88 to 108 (FILA…ALPF), 117 to 137 (IGVG…GVVT), 159 to 179 (ISYE…SGSL), 191 to 211 (VWFI…AVAE), 241 to 261 (FFML…TVLF), 273 to 293 (FIPG…LFIW), and 313 to 333 (VLLP…QLFF).

This sequence belongs to the complex I subunit 1 family. NDH-1 is composed of 14 different subunits. Subunits NuoA, H, J, K, L, M, N constitute the membrane sector of the complex.

The protein resides in the cell membrane. The catalysed reaction is a quinone + NADH + 5 H(+)(in) = a quinol + NAD(+) + 4 H(+)(out). Functionally, NDH-1 shuttles electrons from NADH, via FMN and iron-sulfur (Fe-S) centers, to quinones in the respiratory chain. The immediate electron acceptor for the enzyme in this species is believed to be ubiquinone. Couples the redox reaction to proton translocation (for every two electrons transferred, four hydrogen ions are translocated across the cytoplasmic membrane), and thus conserves the redox energy in a proton gradient. This subunit may bind ubiquinone. This Anoxybacillus flavithermus (strain DSM 21510 / WK1) protein is NADH-quinone oxidoreductase subunit H.